Reading from the N-terminus, the 243-residue chain is Pyridoxine 5'-phosphate synthase (243 aa).

N9 lines the 3-amino-2-oxopropyl phosphate pocket. Position 11–12 (11–12 (DH)) interacts with 1-deoxy-D-xylulose 5-phosphate. R20 provides a ligand contact to 3-amino-2-oxopropyl phosphate. H45 functions as the Proton acceptor in the catalytic mechanism. Positions 47 and 52 each coordinate 1-deoxy-D-xylulose 5-phosphate. Catalysis depends on E72, which acts as the Proton acceptor. T102 is a binding site for 1-deoxy-D-xylulose 5-phosphate. H193 (proton donor) is an active-site residue. 3-amino-2-oxopropyl phosphate contacts are provided by residues G194 and 215-216 (GH).

Belongs to the PNP synthase family. Homooctamer; tetramer of dimers.

It is found in the cytoplasm. The enzyme catalyses 3-amino-2-oxopropyl phosphate + 1-deoxy-D-xylulose 5-phosphate = pyridoxine 5'-phosphate + phosphate + 2 H2O + H(+). Its pathway is cofactor biosynthesis; pyridoxine 5'-phosphate biosynthesis; pyridoxine 5'-phosphate from D-erythrose 4-phosphate: step 5/5. Functionally, catalyzes the complicated ring closure reaction between the two acyclic compounds 1-deoxy-D-xylulose-5-phosphate (DXP) and 3-amino-2-oxopropyl phosphate (1-amino-acetone-3-phosphate or AAP) to form pyridoxine 5'-phosphate (PNP) and inorganic phosphate. This chain is Pyridoxine 5'-phosphate synthase, found in Vibrio parahaemolyticus serotype O3:K6 (strain RIMD 2210633).